We begin with the raw amino-acid sequence, 517 residues long: Retinal dehydrogenase 2 (517 aa).

NAD(+)-binding positions include 184–186 (IPW), 210–213 (KPAE), and 264–266 (STE). Glu286 serves as the catalytic Proton acceptor. Cys320 functions as the Nucleophile in the catalytic mechanism. NAD(+) is bound by residues 366-370 (KQYNK) and Glu417.

It belongs to the aldehyde dehydrogenase family. In terms of assembly, homotetramer. Expressed in the high vocal center (HVC) which integrates auditory and motor activities and constitutes a nodal nucleus on the song system.

It localises to the cytoplasm. It catalyses the reaction retinal + NAD(+) + H2O = retinoate + NADH + 2 H(+). It carries out the reaction all-trans-retinal + NAD(+) + H2O = all-trans-retinoate + NADH + 2 H(+). The catalysed reaction is all-trans-13,14-dihydroretinal + NAD(+) + H2O = all-trans-13,14-dihydroretinoate + NADH + 2 H(+). It functions in the pathway cofactor metabolism; retinol metabolism. In terms of biological role, catalyzes the NAD-dependent oxidation of aldehyde substrates, such as all-trans-retinal and all-trans-13,14-dihydroretinal, to their corresponding carboxylic acids, all-trans-retinoate and all-trans-13,14-dihydroretinoate, respectively. Retinoate signaling is critical for the transcriptional control of many genes, for instance it is crucial for initiation of meiosis in both male and female. Recognizes retinal as substrate, both in its free form and when bound to cellular retinol-binding protein. Lacks activity with benzaldehyde, acetaldehyde and octanal. Displays complete lack of activity with citral. Plays a significant role in the acquisition and production of learned songs. The sequence is that of Retinal dehydrogenase 2 (ALDH1A2) from Taeniopygia guttata (Zebra finch).